Consider the following 460-residue polypeptide: Cysteine--tRNA ligase (460 aa).

Cys28 contributes to the Zn(2+) binding site. A 'HIGH' region motif is present at residues 30 to 40 (MTVYDYCHLGH). Residues Cys209, His234, and Glu238 each contribute to the Zn(2+) site. The 'KMSKS' region motif lies at 266–270 (KMSKS). Lys269 provides a ligand contact to ATP.

Belongs to the class-I aminoacyl-tRNA synthetase family. As to quaternary structure, monomer. Zn(2+) is required as a cofactor.

The protein localises to the cytoplasm. The catalysed reaction is tRNA(Cys) + L-cysteine + ATP = L-cysteinyl-tRNA(Cys) + AMP + diphosphate. The polypeptide is Cysteine--tRNA ligase (Pseudomonas paraeruginosa (strain DSM 24068 / PA7) (Pseudomonas aeruginosa (strain PA7))).